Reading from the N-terminus, the 454-residue chain is Epsin-1 (454 aa).

Residues 11–143 enclose the ENTH domain; it reads NLVKGYSSTQ…SDDERLNEER (133 aa). 2 disordered regions span residues 142-195 and 292-350; these read ERNM…EDYE and YLAS…GNQS. Positions 149 to 160 are enriched in basic residues; sequence GRNRKGRRRRGT. A Phosphothreonine modification is found at Thr160. Ser163 bears the Phosphoserine mark. UIM domains are found at residues 165–184 and 189–208; these read ENDD…AEED and KQDE…EELK. Thr180 bears the Phosphothreonine mark. Over residues 180–191 the composition is skewed to basic and acidic residues; that stretch reads TAEEDERRRKQD. Residues 292-302 are compositionally biased toward low complexity; that stretch reads YLASMQQQQQA. Composition is skewed to polar residues over residues 303 to 329 and 340 to 350; these read MSNN…ASSP and PLIQNRTGNQS. Residue Ser328 is modified to Phosphoserine. Lys357 participates in a covalent cross-link: Glycyl lysine isopeptide (Lys-Gly) (interchain with G-Cter in ubiquitin). A phosphothreonine mark is found at Thr364, Thr366, Thr384, Thr386, and Thr388. The span at 384–398 shows a compositional bias: polar residues; it reads TKTGTFINSQGTGYR. Residues 384–405 form a disordered region; sequence TKTGTFINSQGTGYRQVSDDPN. A phosphothreonine; by PRK1 mark is found at Thr395 and Thr415. Residues 418–428 are compositionally biased toward polar residues; that stretch reads PSTSVVPTQTG. The segment at 418-454 is disordered; it reads PSTSVVPTQTGYGFGNQSQQQSQNNGSNNRGYTLIDL. A compositionally biased stretch (low complexity) spans 432-446; that stretch reads GNQSQQQSQNNGSNN. The tract at residues 447–454 is clathrin-binding; the sequence is RGYTLIDL.

The protein belongs to the epsin family. In terms of assembly, interacts with EDE1 and PAN1.

The protein localises to the cytoplasm. The protein resides in the membrane. In terms of biological role, binds to membranes enriched in phosphatidylinositol 3,5-bisphosphate (PtdIns(3,5)P2) and phosphatidylinositol 4,5-bisphosphate (PtdIns(4,5)P2). Required for endocytosis and localization of actin. Negatively regulated via phosphorylation. This Saccharomyces cerevisiae (strain ATCC 204508 / S288c) (Baker's yeast) protein is Epsin-1 (ENT1).